A 300-amino-acid polypeptide reads, in one-letter code: Acetyl-coenzyme A carboxylase carboxyl transferase subunit beta (300 aa).

Residues 24–293 (LWTNCESCSQ…NAPGAALGGA (270 aa)) form the CoA carboxyltransferase N-terminal domain. The Zn(2+) site is built by Cys-28, Cys-31, Cys-47, and Cys-50. Residues 28-50 (CESCSQMILVKDLQKAMNVCPHC) form a C4-type zinc finger.

The protein belongs to the AccD/PCCB family. As to quaternary structure, acetyl-CoA carboxylase is a heterohexamer composed of biotin carboxyl carrier protein (AccB), biotin carboxylase (AccC) and two subunits each of ACCase subunit alpha (AccA) and ACCase subunit beta (AccD). Zn(2+) is required as a cofactor.

The protein localises to the cytoplasm. The enzyme catalyses N(6)-carboxybiotinyl-L-lysyl-[protein] + acetyl-CoA = N(6)-biotinyl-L-lysyl-[protein] + malonyl-CoA. Its pathway is lipid metabolism; malonyl-CoA biosynthesis; malonyl-CoA from acetyl-CoA: step 1/1. Its function is as follows. Component of the acetyl coenzyme A carboxylase (ACC) complex. Biotin carboxylase (BC) catalyzes the carboxylation of biotin on its carrier protein (BCCP) and then the CO(2) group is transferred by the transcarboxylase to acetyl-CoA to form malonyl-CoA. In Gluconacetobacter diazotrophicus (strain ATCC 49037 / DSM 5601 / CCUG 37298 / CIP 103539 / LMG 7603 / PAl5), this protein is Acetyl-coenzyme A carboxylase carboxyl transferase subunit beta.